Consider the following 124-residue polypeptide: Small ribosomal subunit protein uS12 (124 aa).

Residue aspartate 89 is modified to 3-methylthioaspartic acid. The tract at residues 104–124 (SAGVQNRNRGRSKYGTKRPKK) is disordered. A compositionally biased stretch (basic residues) spans 111–124 (NRGRSKYGTKRPKK).

This sequence belongs to the universal ribosomal protein uS12 family. In terms of assembly, part of the 30S ribosomal subunit. Contacts proteins S8 and S17. May interact with IF1 in the 30S initiation complex.

In terms of biological role, with S4 and S5 plays an important role in translational accuracy. Interacts with and stabilizes bases of the 16S rRNA that are involved in tRNA selection in the A site and with the mRNA backbone. Located at the interface of the 30S and 50S subunits, it traverses the body of the 30S subunit contacting proteins on the other side and probably holding the rRNA structure together. The combined cluster of proteins S8, S12 and S17 appears to hold together the shoulder and platform of the 30S subunit. This Pelotomaculum thermopropionicum (strain DSM 13744 / JCM 10971 / SI) protein is Small ribosomal subunit protein uS12.